We begin with the raw amino-acid sequence, 337 residues long: MSVAGGLEYLEKLRDFFYGLAELRDRLKERGFTWPRPYPAEGVAAGTVKVKAGFPAMLRNGVIMDVTNVEQAQIAEEAGAVGVMVLDKLPYDVRKAGGVARMADLKVIEEVMSHVTIPVSAKVRIGHYYEAFLLQEIGVDLIDESEVLTPVDDQHHINKWLFTVPFVNGCRELCEALRRISEGASMIRSKGEAGTGNVSEAVKHFKALYRAINELAAAEEERLRDYARQCQAPLELVALTARLGRLPVITFAAGGIATPADAALMMWLGADGVFVGSGIFKSQDPRQRAEAIVLATAKWDDPEAVVEAQKMVSERAAMVGIDIKTLKPEELLQTRGL.

D-ribose 5-phosphate is bound at residue aspartate 65. Lysine 122 serves as the catalytic Schiff-base intermediate with D-ribose 5-phosphate. D-ribose 5-phosphate is bound at residue glycine 194. D-glyceraldehyde 3-phosphate is bound at residue lysine 206. D-ribose 5-phosphate-binding positions include glycine 255 and 276-277; that span reads GS.

The protein belongs to the PdxS/SNZ family. In terms of assembly, in the presence of PdxT, forms a dodecamer of heterodimers.

It catalyses the reaction aldehydo-D-ribose 5-phosphate + D-glyceraldehyde 3-phosphate + L-glutamine = pyridoxal 5'-phosphate + L-glutamate + phosphate + 3 H2O + H(+). The protein operates within cofactor biosynthesis; pyridoxal 5'-phosphate biosynthesis. Functionally, catalyzes the formation of pyridoxal 5'-phosphate from ribose 5-phosphate (RBP), glyceraldehyde 3-phosphate (G3P) and ammonia. The ammonia is provided by the PdxT subunit. Can also use ribulose 5-phosphate and dihydroxyacetone phosphate as substrates, resulting from enzyme-catalyzed isomerization of RBP and G3P, respectively. This chain is Pyridoxal 5'-phosphate synthase subunit PdxS, found in Pyrobaculum arsenaticum (strain DSM 13514 / JCM 11321 / PZ6).